Here is a 337-residue protein sequence, read N- to C-terminus: Holliday junction branch migration complex subunit RuvB (337 aa).

The disordered stretch occupies residues 1–20 (MQTRFVSPVNHDEEQDEPSV). Positions 1–181 (MQTRFVSPVN…FGIILRLDLY (181 aa)) are large ATPase domain (RuvB-L). Residues arginine 21, glycine 62, lysine 65, threonine 66, threonine 67, 128 to 130 (EDY), arginine 171, tyrosine 181, and arginine 218 contribute to the ATP site. Threonine 66 provides a ligand contact to Mg(2+). Positions 182-252 (DPSELTVIVT…IANTALFALG (71 aa)) are small ATPAse domain (RuvB-S). The interval 255 to 337 (QKGLDILDRR…SHTRDLTSFL (83 aa)) is head domain (RuvB-H). DNA contacts are provided by arginine 310 and arginine 315.

Belongs to the RuvB family. Homohexamer. Forms an RuvA(8)-RuvB(12)-Holliday junction (HJ) complex. HJ DNA is sandwiched between 2 RuvA tetramers; dsDNA enters through RuvA and exits via RuvB. An RuvB hexamer assembles on each DNA strand where it exits the tetramer. Each RuvB hexamer is contacted by two RuvA subunits (via domain III) on 2 adjacent RuvB subunits; this complex drives branch migration. In the full resolvosome a probable DNA-RuvA(4)-RuvB(12)-RuvC(2) complex forms which resolves the HJ.

The protein resides in the cytoplasm. It catalyses the reaction ATP + H2O = ADP + phosphate + H(+). Its function is as follows. The RuvA-RuvB-RuvC complex processes Holliday junction (HJ) DNA during genetic recombination and DNA repair, while the RuvA-RuvB complex plays an important role in the rescue of blocked DNA replication forks via replication fork reversal (RFR). RuvA specifically binds to HJ cruciform DNA, conferring on it an open structure. The RuvB hexamer acts as an ATP-dependent pump, pulling dsDNA into and through the RuvAB complex. RuvB forms 2 homohexamers on either side of HJ DNA bound by 1 or 2 RuvA tetramers; 4 subunits per hexamer contact DNA at a time. Coordinated motions by a converter formed by DNA-disengaged RuvB subunits stimulates ATP hydrolysis and nucleotide exchange. Immobilization of the converter enables RuvB to convert the ATP-contained energy into a lever motion, pulling 2 nucleotides of DNA out of the RuvA tetramer per ATP hydrolyzed, thus driving DNA branch migration. The RuvB motors rotate together with the DNA substrate, which together with the progressing nucleotide cycle form the mechanistic basis for DNA recombination by continuous HJ branch migration. Branch migration allows RuvC to scan DNA until it finds its consensus sequence, where it cleaves and resolves cruciform DNA. The polypeptide is Holliday junction branch migration complex subunit RuvB (Methanospirillum hungatei JF-1 (strain ATCC 27890 / DSM 864 / NBRC 100397 / JF-1)).